The following is a 366-amino-acid chain: L-idonate 5-dehydrogenase (366 aa).

Zn(2+) contacts are provided by Cys56, His81, Cys111, Cys114, Cys117, Cys125, and Glu167.

Belongs to the zinc-containing alcohol dehydrogenase family. Requires Zn(2+) as cofactor.

The enzyme catalyses L-idonate + NAD(+) = 5-dehydro-D-gluconate + NADH + H(+). Its pathway is carbohydrate acid metabolism; L-idonate degradation. In terms of biological role, involved in the catabolism of ascorbate to tartrate. The enzyme has no activity with NADP(+). The chain is L-idonate 5-dehydrogenase from Vitis vinifera (Grape).